The chain runs to 304 residues: Probable phytol kinase 2, chloroplastic (304 aa).

Residues 1 to 59 constitute a chloroplast transit peptide; it reads MVSLISAHLLSLPSSAPRSRPQSRPPLSPPAAAAAASCSFDLPRPRRLVADGSRRKGTM. The next 7 membrane-spanning stretches (helical) occupy residues 68–88, 113–133, 134–154, 170–190, 194–214, 231–251, and 256–276; these read SGLA…LALL, IGMV…APFL, AAVA…GVMK, ELLK…SIFW, PIAI…DIVG, AGSI…MHYF, and FIEE…TAAL.

This sequence belongs to the polyprenol kinase family.

The protein resides in the plastid. It is found in the chloroplast membrane. It catalyses the reaction phytol + CTP = phytyl phosphate + CDP + H(+). It functions in the pathway cofactor biosynthesis; tocopherol biosynthesis. Functionally, involved in the activation and reutilization of phytol from chlorophyll degradation in plant metabolism, including tocopherol biosynthesis. Catalyzes the conversion of phytol to phytol monophosphate (PMP). The chain is Probable phytol kinase 2, chloroplastic from Oryza sativa subsp. japonica (Rice).